We begin with the raw amino-acid sequence, 187 residues long: Putative adenylate kinase (187 aa).

5 residues coordinate ATP: Gly-10, Gly-12, Lys-13, Thr-14, and Ile-15. The segment at 30–53 (SLSQFVIENKLYTEYDELRQSYII) is NMP. Positions 103–113 (GRGWADIKVAE) are LID. Arg-104 provides a ligand contact to ATP.

This sequence belongs to the adenylate kinase family. AK6 subfamily. As to quaternary structure, interacts with uS11. Not a structural component of 40S pre-ribosomes, but transiently interacts with them by binding to uS11.

It catalyses the reaction AMP + ATP = 2 ADP. It carries out the reaction ATP + H2O = ADP + phosphate + H(+). Broad-specificity nucleoside monophosphate (NMP) kinase that catalyzes the reversible transfer of the terminal phosphate group between nucleoside triphosphates and monophosphates. Also has ATPase activity. Involved in the late maturation steps of the 30S ribosomal particles, specifically 16S rRNA maturation. While NMP activity is not required for ribosome maturation, ATPase activity is. Associates transiently with small ribosomal subunit protein uS11. ATP hydrolysis breaks the interaction with uS11. May temporarily remove uS11 from the ribosome to enable a conformational change of the ribosomal RNA that is needed for the final maturation step of the small ribosomal subunit. The sequence is that of Putative adenylate kinase from Saccharolobus islandicus (strain L.S.2.15 / Lassen #1) (Sulfolobus islandicus).